A 99-amino-acid polypeptide reads, in one-letter code: UPF0729 protein CG18508 (99 aa).

The interval 60 to 99 is disordered; it reads PGGKKTENVSDDDAEESENPPLNATAMAAETEVDESKKEI. A compositionally biased stretch (acidic residues) spans 68–77; it reads VSDDDAEESE. S69 bears the Phosphoserine mark.

This sequence belongs to the UPF0729 family.

The protein is UPF0729 protein CG18508 of Drosophila melanogaster (Fruit fly).